A 151-amino-acid polypeptide reads, in one-letter code: D-aminoacyl-tRNA deacylase (151 aa).

The Gly-cisPro motif, important for rejection of L-amino acids signature appears at 139-140; sequence GP.

This sequence belongs to the DTD family. In terms of assembly, homodimer.

The protein localises to the cytoplasm. The catalysed reaction is glycyl-tRNA(Ala) + H2O = tRNA(Ala) + glycine + H(+). It catalyses the reaction a D-aminoacyl-tRNA + H2O = a tRNA + a D-alpha-amino acid + H(+). Its function is as follows. An aminoacyl-tRNA editing enzyme that deacylates mischarged D-aminoacyl-tRNAs. Also deacylates mischarged glycyl-tRNA(Ala), protecting cells against glycine mischarging by AlaRS. Acts via tRNA-based rather than protein-based catalysis; rejects L-amino acids rather than detecting D-amino acids in the active site. By recycling D-aminoacyl-tRNA to D-amino acids and free tRNA molecules, this enzyme counteracts the toxicity associated with the formation of D-aminoacyl-tRNA entities in vivo and helps enforce protein L-homochirality. The protein is D-aminoacyl-tRNA deacylase of Symbiobacterium thermophilum (strain DSM 24528 / JCM 14929 / IAM 14863 / T).